The sequence spans 229 residues: UPF0488 protein C8orf33 (229 aa).

A compositionally biased stretch (low complexity) spans 1-16 (MAALGHLAGEAAAAPG). A disordered region spans residues 1–96 (MAALGHLAGE…GEKASEKLAP (96 aa)). The residue at position 2 (alanine 2) is an N-acetylalanine. Omega-N-methylarginine is present on arginine 27. Residues 69–79 (KKQKNKKKTRN) show a composition bias toward basic residues. Position 82 is a phosphoserine (serine 82).

Belongs to the UPF0488 family.

The polypeptide is UPF0488 protein C8orf33 (C8orf33) (Homo sapiens (Human)).